The sequence spans 120 residues: Putative gamma-glutamylcyclotransferase MJ1514 (120 aa).

7 to 10 (YGSL) contributes to the substrate binding site. E74 acts as the Proton acceptor in catalysis.

It belongs to the gamma-glutamylcyclotransferase family.

Putative gamma-glutamylcyclotransferase. In Methanocaldococcus jannaschii (strain ATCC 43067 / DSM 2661 / JAL-1 / JCM 10045 / NBRC 100440) (Methanococcus jannaschii), this protein is Putative gamma-glutamylcyclotransferase MJ1514.